A 259-amino-acid polypeptide reads, in one-letter code: Small ribosomal subunit protein eS4 (259 aa).

Residues Leu-41–Met-100 form the S4 RNA-binding domain.

This sequence belongs to the eukaryotic ribosomal protein eS4 family.

In Caenorhabditis elegans, this protein is Small ribosomal subunit protein eS4 (rps-4).